A 479-amino-acid chain; its full sequence is Sulfate adenylyltransferase subunit 1 (479 aa).

The region spanning 25 to 239 (KSLLRFLTCG…EVLETVDIQR (215 aa)) is the tr-type G domain. Residues 34–41 (GSVDDGKS) form a G1 region. Residue 34-41 (GSVDDGKS) coordinates GTP. The segment at 92–96 (GITID) is G2. Residues 113–116 (DTPG) are G3. GTP-binding positions include 113 to 117 (DTPGH) and 168 to 171 (NKMD). Residues 168–171 (NKMD) form a G4 region. Residues 206-208 (SAL) form a G5 region.

It belongs to the TRAFAC class translation factor GTPase superfamily. Classic translation factor GTPase family. CysN/NodQ subfamily. In terms of assembly, heterodimer composed of CysD, the smaller subunit, and CysN.

It carries out the reaction sulfate + ATP + H(+) = adenosine 5'-phosphosulfate + diphosphate. It participates in sulfur metabolism; hydrogen sulfide biosynthesis; sulfite from sulfate: step 1/3. Its function is as follows. With CysD forms the ATP sulfurylase (ATPS) that catalyzes the adenylation of sulfate producing adenosine 5'-phosphosulfate (APS) and diphosphate, the first enzymatic step in sulfur assimilation pathway. APS synthesis involves the formation of a high-energy phosphoric-sulfuric acid anhydride bond driven by GTP hydrolysis by CysN coupled to ATP hydrolysis by CysD. The sequence is that of Sulfate adenylyltransferase subunit 1 from Salmonella heidelberg (strain SL476).